The following is a 426-amino-acid chain: Histidine--tRNA ligase (426 aa).

It belongs to the class-II aminoacyl-tRNA synthetase family. As to quaternary structure, homodimer.

It localises to the cytoplasm. The catalysed reaction is tRNA(His) + L-histidine + ATP = L-histidyl-tRNA(His) + AMP + diphosphate + H(+). This Prochlorococcus marinus (strain MIT 9301) protein is Histidine--tRNA ligase.